The sequence spans 183 residues: Heavy metal-associated isoprenylated plant protein 44 (183 aa).

Residues Leu-50–Glu-113 form the HMA domain. A metal cation is bound by residues Cys-61 and Cys-64. At Cys-180 the chain carries Cysteine methyl ester. The S-farnesyl cysteine moiety is linked to residue Cys-180. The propeptide at Arg-181–Met-183 is removed in mature form.

The protein belongs to the HIPP family.

Its function is as follows. Heavy-metal-binding protein. This Arabidopsis thaliana (Mouse-ear cress) protein is Heavy metal-associated isoprenylated plant protein 44.